The sequence spans 499 residues: Glycerol kinase (499 aa).

An ADP-binding site is contributed by T13. ATP is bound by residues T13, T14, and S15. T13 is a sn-glycerol 3-phosphate binding site. R17 serves as a coordination point for ADP. Sn-glycerol 3-phosphate is bound by residues R83, E84, Y135, and D244. Positions 83, 84, 135, 244, and 245 each coordinate glycerol. Residues T266 and G309 each coordinate ADP. Residues T266, G309, Q313, and G410 each contribute to the ATP site. ADP contacts are provided by G410 and N414.

Belongs to the FGGY kinase family.

It carries out the reaction glycerol + ATP = sn-glycerol 3-phosphate + ADP + H(+). It participates in polyol metabolism; glycerol degradation via glycerol kinase pathway; sn-glycerol 3-phosphate from glycerol: step 1/1. Inhibited by fructose 1,6-bisphosphate (FBP). In terms of biological role, key enzyme in the regulation of glycerol uptake and metabolism. Catalyzes the phosphorylation of glycerol to yield sn-glycerol 3-phosphate. The sequence is that of Glycerol kinase from Paraburkholderia xenovorans (strain LB400).